The chain runs to 616 residues: TAF6-like RNA polymerase II p300/CBP-associated factor-associated factor 65 kDa subunit 6L (616 aa).

Disordered regions lie at residues 399–432 and 455–539; these read SLLL…EDPS and FGTG…GTRD. A phosphoserine mark is found at serine 494 and serine 500. Asymmetric dimethylarginine occurs at positions 549, 555, and 587.

This sequence belongs to the TAF6 family. As to quaternary structure, the PCAF complex is composed of a number of TBP-associated factors (TAFS), such as TAF5, TAF5L, TAF6, TAF6L, TAF9, TAF10 and TAF12, PCAF, and also PCAF-associated factors (PAFs), such as TADA2L/ADA2, TADA3L/ADA3 and SPT3. Component of the STAGA transcription coactivator-HAT complex, at least composed of SUPT3H, GCN5L2, TAF5L, TAF6L, SUPT7L, TADA3L, TAD1L, TAF10, TAF12, TRRAP and TAF9.

The protein resides in the nucleus. In terms of biological role, functions as a component of the PCAF complex. The PCAF complex is capable of efficiently acetylating histones in a nucleosomal context. The PCAF complex could be considered as the human version of the yeast SAGA complex. With TAF5L, acts as an epigenetic regulator essential for somatic reprogramming. Regulates target genes through H3K9ac deposition and MYC recruitment which trigger MYC regulatory network to orchestrate gene expression programs to control embryonic stem cell state. Functions with MYC to activate target gene expression through RNA polymerase II pause release. The protein is TAF6-like RNA polymerase II p300/CBP-associated factor-associated factor 65 kDa subunit 6L of Mus musculus (Mouse).